Here is an 837-residue protein sequence, read N- to C-terminus: Periplasmic nitrate reductase (837 aa).

A signal peptide (tat-type signal) is located at residues 1-31 (MKLNRRDFIKANAAAAAISAAGLSVPGAAVA). The 57-residue stretch at 37–93 (IRWDKAACRFCGTGCGVLVGTQDGRVVATQGDPDAPVNRGLNCIKGYFLSKIMYGAD) folds into the 4Fe-4S Mo/W bis-MGD-type domain. Positions 44, 47, 51, and 79 each coordinate [4Fe-4S] cluster. Residues K81, Q148, N173, C177, 210-217 (WGSNMAEM), 241-245 (STFEH), and 260-262 (QTD) contribute to the Mo-bis(molybdopterin guanine dinucleotide) site. Residues 308-329 (EKNATSNGYPDADGKPKGDTGK) are disordered. Residues 319-329 (ADGKPKGDTGK) show a composition bias toward basic and acidic residues. Mo-bis(molybdopterin guanine dinucleotide) is bound by residues M381, Q385, N491, 517-518 (SD), K540, D567, and 727-736 (TGRVLEHWHT). F803 contacts substrate. Mo-bis(molybdopterin guanine dinucleotide)-binding residues include N811 and K828.

Belongs to the prokaryotic molybdopterin-containing oxidoreductase family. NasA/NapA/NarB subfamily. Component of the periplasmic nitrate reductase NapAB complex composed of NapA and NapB. [4Fe-4S] cluster is required as a cofactor. Mo-bis(molybdopterin guanine dinucleotide) serves as cofactor. Predicted to be exported by the Tat system. The position of the signal peptide cleavage has not been experimentally proven.

It is found in the periplasm. It catalyses the reaction 2 Fe(II)-[cytochrome] + nitrate + 2 H(+) = 2 Fe(III)-[cytochrome] + nitrite + H2O. Functionally, catalytic subunit of the periplasmic nitrate reductase complex NapAB. Receives electrons from NapB and catalyzes the reduction of nitrate to nitrite. In Dechloromonas aromatica (strain RCB), this protein is Periplasmic nitrate reductase.